Consider the following 319-residue polypeptide: Free fatty acid receptor 3 (319 aa).

The Extracellular portion of the chain corresponds to 1–15 (MDTSFFPGNHWLFFS). A helical transmembrane segment spans residues 16–36 (VDLLVFLVGLPLNVMALVVFV). The Cytoplasmic portion of the chain corresponds to 37–43 (NKLRRRP). Residues 44–64 (VAVDLLLLNLTISDLLLLLFL) traverse the membrane as a helical segment. Over 65–98 (PFRIVEAACGMKWILPFIFCPLSGFLFFTTIYLT) the chain is Extracellular. A disulfide bond links Cys-84 and Cys-165. Residues 99 to 119 (SLFLMTVSIERFLSVAYPLWY) traverse the membrane as a helical segment. At 120–127 (KTRPRLAQ) the chain is on the cytoplasmic side. Residues 128 to 148 (AGLVSGICWFLASAHCSVIYV) traverse the membrane as a helical segment. The Extracellular segment spans residues 149–183 (TEYWGNATYSQGTNGTCYLEFREDQLAILLPVRLE). The helical transmembrane segment at 184-206 (MAVVLFMVPLCITSYCYSRLVWI) threads the bilayer. Over 207 to 218 (LSQGASRRRRKR) the chain is Cytoplasmic. The helical transmembrane segment at 219–239 (VMGLLVATLLIFFVCFGPYNM) threads the bilayer. At 240 to 254 (SHVVGYVRGESPTWR) the chain is on the extracellular side. A helical membrane pass occupies residues 255–275 (SYVLLLSTLNSCIDPLVFYFS). Topologically, residues 276 to 319 (SSKFQADFHQLLSRLIRACVPWTQEVSLELKVKNGEEPSKECPS) are cytoplasmic.

Belongs to the G-protein coupled receptor 1 family. Expressed in the sympathetic nervous system.

It is found in the cell membrane. In terms of biological role, g protein-coupled receptor that is activated by a major product of dietary fiber digestion, the short chain fatty acids (SCFAs), and that plays a role in the regulation of whole-body energy homeostasis and in intestinal immunity. In omnivorous mammals, the short chain fatty acids acetate, propionate and butyrate are produced primarily by the gut microbiome that metabolizes dietary fibers. SCFAs serve as a source of energy but also act as signaling molecules. That G protein-coupled receptor is probably coupled to the pertussis toxin-sensitive, G(i/o)-alpha family of G proteins. Its activation results in the formation of inositol 1,4,5-trisphosphate, the mobilization of intracellular calcium, the phosphorylation of the MAPK3/ERK1 and MAPK1/ERK2 kinases and the inhibition of intracellular cAMP accumulation. Activated by SCFAs and by beta-hydroxybutyrate, a ketone body produced by the liver upon starvation, it inhibits N-type calcium channels and modulates the activity of sympathetic neurons through a signaling cascade involving the beta and gamma subunits of its coupled G protein, phospholipase C and MAP kinases. Thereby, it may regulate energy expenditure through the control of the sympathetic nervous system that controls for instance heart rate. Upon activation by SCFAs accumulating in the intestine, it may also signal to the brain via neural circuits which in turn would regulate intestinal gluconeogenesis. May also control the production of hormones involved in whole-body energy homeostasis. May for instance, regulate blood pressure through renin secretion. May also regulate secretion of the PYY peptide by enteroendocrine cells and control gut motility, intestinal transit rate, and the harvesting of energy from SCFAs produced by gut microbiota. May also indirectly regulate the production of LEP/Leptin, a hormone acting on the CNS to inhibit food intake, in response to the presence of short-chain fatty acids in the intestine. Finally, may also play a role in glucose homeostasis. Besides its role in energy homeostasis, may play a role in intestinal immunity. May mediate the activation of the inflammatory and immune response by SCFAs in the gut, regulating the rapid production of chemokines and cytokines by intestinal epithelial cells. This chain is Free fatty acid receptor 3 (Ffar3), found in Rattus norvegicus (Rat).